The chain runs to 229 residues: Cytidylate kinase (229 aa).

15-23 (GPAASGKST) provides a ligand contact to ATP.

This sequence belongs to the cytidylate kinase family. Type 1 subfamily.

The protein resides in the cytoplasm. It carries out the reaction CMP + ATP = CDP + ADP. The enzyme catalyses dCMP + ATP = dCDP + ADP. This chain is Cytidylate kinase, found in Herpetosiphon aurantiacus (strain ATCC 23779 / DSM 785 / 114-95).